Here is a 1178-residue protein sequence, read N- to C-terminus: Pesticidal crystal protein Cry1Ac (1178 aa).

It belongs to the delta endotoxin family.

Promotes colloidosmotic lysis by binding to the midgut epithelial cells of many lepidopteran larvae. This is Pesticidal crystal protein Cry1Ac (cry1Ac) from Bacillus thuringiensis subsp. kurstaki.